The following is a 265-amino-acid chain: Cytochrome c oxidase subunit 3 (265 aa).

A run of 7 helical transmembrane segments spans residues 16–36 (PWPISGSLGALATTVGGVMYM), 41–61 (GGATLLSLGLIFILYTMFVWW), 81–101 (GPRYGSISFIVSEVMFLFAFF), 137–157 (TPILLSSGAAVTWAHHAILAG), 162–182 (AVYALVATVSLALVFTGFQGM), 200–220 (FFLATGFHGFHVIIGTLFLII), and 245–265 (WHFVDVVRLFPFVSIYWWGGI).

The protein belongs to the cytochrome c oxidase subunit 3 family. In terms of assembly, component of the cytochrome c oxidase (complex IV, CIV), a multisubunit enzyme composed of a catalytic core of 3 subunits and several supernumerary subunits. The complex exists as a monomer or a dimer and forms supercomplexes (SCs) in the inner mitochondrial membrane with ubiquinol-cytochrome c oxidoreductase (cytochrome b-c1 complex, complex III, CIII).

Its subcellular location is the mitochondrion inner membrane. It carries out the reaction 4 Fe(II)-[cytochrome c] + O2 + 8 H(+)(in) = 4 Fe(III)-[cytochrome c] + 2 H2O + 4 H(+)(out). Its function is as follows. Component of the cytochrome c oxidase, the last enzyme in the mitochondrial electron transport chain which drives oxidative phosphorylation. The respiratory chain contains 3 multisubunit complexes succinate dehydrogenase (complex II, CII), ubiquinol-cytochrome c oxidoreductase (cytochrome b-c1 complex, complex III, CIII) and cytochrome c oxidase (complex IV, CIV), that cooperate to transfer electrons derived from NADH and succinate to molecular oxygen, creating an electrochemical gradient over the inner membrane that drives transmembrane transport and the ATP synthase. Cytochrome c oxidase is the component of the respiratory chain that catalyzes the reduction of oxygen to water. Electrons originating from reduced cytochrome c in the intermembrane space (IMS) are transferred via the dinuclear copper A center (CU(A)) of subunit 2 and heme A of subunit 1 to the active site in subunit 1, a binuclear center (BNC) formed by heme A3 and copper B (CU(B)). The BNC reduces molecular oxygen to 2 water molecules using 4 electrons from cytochrome c in the IMS and 4 protons from the mitochondrial matrix. This is Cytochrome c oxidase subunit 3 (COX3) from Vicia faba (Broad bean).